The sequence spans 293 residues: FAS1 domain-containing protein DEHA2G15708g (293 aa).

The N-terminal stretch at 1–18 is a signal peptide; it reads MKLSSILYVSVLAHLVMS. The segment covering 76–87 has biased composition (basic and acidic residues); it reads DHIGENEKREAK. The interval 76-126 is disordered; it reads DHIGENEKREAKNVYNLQSLKEGLDDENDKREGNVNKPEVSEEGSNKGDKR. One can recognise an FAS1 domain in the interval 141-290; the sequence is QNLLQSILPQ…GYIFVINDVL (150 aa).

The protein resides in the vacuole. The protein is FAS1 domain-containing protein DEHA2G15708g of Debaryomyces hansenii (strain ATCC 36239 / CBS 767 / BCRC 21394 / JCM 1990 / NBRC 0083 / IGC 2968) (Yeast).